We begin with the raw amino-acid sequence, 503 residues long: Aminoaldehyde dehydrogenase 1, peroxisomal (503 aa).

Residues asparagine 27, isoleucine 28, aspartate 99, and leucine 189 each coordinate Na(+). 238–245 (GSSATGSK) is a binding site for NAD(+). Catalysis depends on glutamate 260, which acts as the Proton acceptor. Cysteine 294 and glutamate 393 together coordinate NAD(+). Cysteine 294 acts as the Nucleophile in catalysis. The Microbody targeting signal motif lies at 501-503 (SKL).

It belongs to the aldehyde dehydrogenase family. Forms homodimers.

It localises to the peroxisome. It catalyses the reaction 3-aminopropanal + NAD(+) + H2O = beta-alanine + NADH + 2 H(+). The enzyme catalyses 4-aminobutanal + NAD(+) + H2O = 4-aminobutanoate + NADH + 2 H(+). It carries out the reaction 4-guanidinobutanal + NAD(+) + H2O = 4-guanidinobutanoate + NADH + 2 H(+). It functions in the pathway amine and polyamine biosynthesis; betaine biosynthesis via choline pathway; betaine from betaine aldehyde: step 1/1. Its function is as follows. Dehydrogenase that catalyzes the oxidation of several aminoaldehydes. Metabolizes and detoxifies aldehyde products of polyamine degradation to non-toxic amino acids. Catalyzes the oxidation of 3-aminopropanal to beta-alanine. Catalyzes the oxidation of 4-aminobutanal to 4-aminobutanoate. Catalyzes the oxidation of 4-guanidinobutanal to 4-guanidinobutanoate. The protein is Aminoaldehyde dehydrogenase 1, peroxisomal of Pisum sativum (Garden pea).